Here is a 248-residue protein sequence, read N- to C-terminus: Ribonuclease PH (248 aa).

Phosphate contacts are provided by residues arginine 86 and 124-126 (GTR).

The protein belongs to the RNase PH family. As to quaternary structure, homohexameric ring arranged as a trimer of dimers.

The catalysed reaction is tRNA(n+1) + phosphate = tRNA(n) + a ribonucleoside 5'-diphosphate. Phosphorolytic 3'-5' exoribonuclease that plays an important role in tRNA 3'-end maturation. Removes nucleotide residues following the 3'-CCA terminus of tRNAs; can also add nucleotides to the ends of RNA molecules by using nucleoside diphosphates as substrates, but this may not be physiologically important. Probably plays a role in initiation of 16S rRNA degradation (leading to ribosome degradation) during starvation. The chain is Ribonuclease PH from Clostridium perfringens (strain 13 / Type A).